The primary structure comprises 752 residues: Ribosomal RNA large subunit methyltransferase K/L (752 aa).

One can recognise a THUMP domain in the interval 53 to 164 (QMYKICLWTR…RDELHISIDL (112 aa)).

This sequence belongs to the methyltransferase superfamily. RlmKL family.

The protein resides in the cytoplasm. It carries out the reaction guanosine(2445) in 23S rRNA + S-adenosyl-L-methionine = N(2)-methylguanosine(2445) in 23S rRNA + S-adenosyl-L-homocysteine + H(+). The enzyme catalyses guanosine(2069) in 23S rRNA + S-adenosyl-L-methionine = N(2)-methylguanosine(2069) in 23S rRNA + S-adenosyl-L-homocysteine + H(+). Its function is as follows. Specifically methylates the guanine in position 2445 (m2G2445) and the guanine in position 2069 (m7G2069) of 23S rRNA. The protein is Ribosomal RNA large subunit methyltransferase K/L of Saccharophagus degradans (strain 2-40 / ATCC 43961 / DSM 17024).